The following is a 203-amino-acid chain: UPF0301 protein Sde_3637 (203 aa).

The protein belongs to the UPF0301 (AlgH) family.

The protein is UPF0301 protein Sde_3637 of Saccharophagus degradans (strain 2-40 / ATCC 43961 / DSM 17024).